A 313-amino-acid polypeptide reads, in one-letter code: Ribosomal RNA small subunit methyltransferase H (313 aa).

Residues 35–37, aspartate 55, phenylalanine 79, aspartate 101, and glutamine 108 each bind S-adenosyl-L-methionine; that span reads GGH.

This sequence belongs to the methyltransferase superfamily. RsmH family.

It localises to the cytoplasm. The enzyme catalyses cytidine(1402) in 16S rRNA + S-adenosyl-L-methionine = N(4)-methylcytidine(1402) in 16S rRNA + S-adenosyl-L-homocysteine + H(+). Specifically methylates the N4 position of cytidine in position 1402 (C1402) of 16S rRNA. The chain is Ribosomal RNA small subunit methyltransferase H from Musicola paradisiaca (strain Ech703) (Dickeya paradisiaca).